The following is a 386-amino-acid chain: Protein phosphatase methylesterase 1 (386 aa).

Residues 1 to 38 are disordered; that stretch reads MSALEKSMHLGRLPSRPPLPGSGGSQSGAKMRMGPGRK. Phosphoserine is present on S15. Position 16 is an asymmetric dimethylarginine; alternate (R16). Residue R16 is modified to Omega-N-methylarginine; alternate. Active-site residues include S156 and D181. Acidic residues predominate over residues 255-265; the sequence is IEEEEEDEEGS. The disordered stretch occupies residues 255–280; it reads IEEEEEDEEGSESVNKRKKEDDMETK. Residues 268 to 280 are compositionally biased toward basic and acidic residues; sequence VNKRKKEDDMETK. Residue H349 is part of the active site.

Belongs to the AB hydrolase superfamily. As to quaternary structure, binds PPP2CA and PPP2CB. Phosphorylated by SIK1 following increases in intracellular sodium, leading to dissociation from the protein phosphatase 2A (PP2A) complex and subsequent dephosphorylation of sodium/potassium-transporting ATPase ATP1A1. Ubiquitous. Highly expressed in testis and brain.

The enzyme catalyses [phosphatase 2A protein]-C-terminal L-leucine methyl ester + H2O = [phosphatase 2A protein]-C-terminal L-leucine + methanol + H(+). In terms of biological role, demethylates proteins that have been reversibly carboxymethylated. Demethylates PPP2CB (in vitro) and PPP2CA. Binding to PPP2CA displaces the manganese ion and inactivates the enzyme. The sequence is that of Protein phosphatase methylesterase 1 (Ppme1) from Mus musculus (Mouse).